The chain runs to 153 residues: D-aminoacyl-tRNA deacylase (153 aa).

The Gly-cisPro motif, important for rejection of L-amino acids motif lies at 142–143 (GP).

It belongs to the DTD family. Homodimer.

The protein resides in the cytoplasm. The enzyme catalyses glycyl-tRNA(Ala) + H2O = tRNA(Ala) + glycine + H(+). It carries out the reaction a D-aminoacyl-tRNA + H2O = a tRNA + a D-alpha-amino acid + H(+). Functionally, an aminoacyl-tRNA editing enzyme that deacylates mischarged D-aminoacyl-tRNAs. Also deacylates mischarged glycyl-tRNA(Ala), protecting cells against glycine mischarging by AlaRS. Acts via tRNA-based rather than protein-based catalysis; rejects L-amino acids rather than detecting D-amino acids in the active site. By recycling D-aminoacyl-tRNA to D-amino acids and free tRNA molecules, this enzyme counteracts the toxicity associated with the formation of D-aminoacyl-tRNA entities in vivo and helps enforce protein L-homochirality. This Acidovorax ebreus (strain TPSY) (Diaphorobacter sp. (strain TPSY)) protein is D-aminoacyl-tRNA deacylase.